The sequence spans 168 residues: DOMON domain-containing protein Y73F4A.2 (168 aa).

Residues 1 to 18 form the signal peptide; it reads MFRSIAVLSALLFAFASA. Positions 26–143 constitute a DOMON domain; the sequence is SDFEVYWRFA…CQKWRFVKSG (118 aa). N-linked (GlcNAc...) asparagine glycosylation is present at asparagine 36. A disordered region spans residues 148 to 168; sequence GQLTRNDKSPKEKKVCPMECN. Residues 152 to 168 show a composition bias toward basic and acidic residues; it reads RNDKSPKEKKVCPMECN.

It localises to the secreted. This is DOMON domain-containing protein Y73F4A.2 from Caenorhabditis elegans.